A 345-amino-acid polypeptide reads, in one-letter code: Biotin synthase (345 aa).

The region spanning 67-295 (YKVQLASLLS…KSRIRLSAGR (229 aa)) is the Radical SAM core domain. Residues cysteine 82, cysteine 86, and cysteine 89 each coordinate [4Fe-4S] cluster. [2Fe-2S] cluster-binding residues include cysteine 126, cysteine 158, cysteine 218, and arginine 290.

It belongs to the radical SAM superfamily. Biotin synthase family. Homodimer. Requires [4Fe-4S] cluster as cofactor. [2Fe-2S] cluster is required as a cofactor.

It carries out the reaction (4R,5S)-dethiobiotin + (sulfur carrier)-SH + 2 reduced [2Fe-2S]-[ferredoxin] + 2 S-adenosyl-L-methionine = (sulfur carrier)-H + biotin + 2 5'-deoxyadenosine + 2 L-methionine + 2 oxidized [2Fe-2S]-[ferredoxin]. It participates in cofactor biosynthesis; biotin biosynthesis; biotin from 7,8-diaminononanoate: step 2/2. Catalyzes the conversion of dethiobiotin (DTB) to biotin by the insertion of a sulfur atom into dethiobiotin via a radical-based mechanism. The polypeptide is Biotin synthase (Prochlorococcus marinus (strain NATL2A)).